We begin with the raw amino-acid sequence, 201 residues long: UPF0301 protein CE2927 (201 aa).

It belongs to the UPF0301 (AlgH) family.

In Corynebacterium efficiens (strain DSM 44549 / YS-314 / AJ 12310 / JCM 11189 / NBRC 100395), this protein is UPF0301 protein CE2927.